A 146-amino-acid chain; its full sequence is UPF0735 ACT domain-containing protein Cphy_3604 (146 aa).

Positions 70–145 constitute an ACT domain; the sequence is TFMLQMDDIP…GIHYLKILGR (76 aa).

It belongs to the UPF0735 family.

The chain is UPF0735 ACT domain-containing protein Cphy_3604 from Lachnoclostridium phytofermentans (strain ATCC 700394 / DSM 18823 / ISDg) (Clostridium phytofermentans).